A 327-amino-acid polypeptide reads, in one-letter code: Aspartate carbamoyltransferase catalytic subunit (327 aa).

Residues R54 and T55 each contribute to the carbamoyl phosphate site. L-aspartate is bound at residue K82. Carbamoyl phosphate is bound by residues R104, H134, and Q137. Residues R177 and R232 each contribute to the L-aspartate site. Carbamoyl phosphate contacts are provided by G280 and P281.

This sequence belongs to the aspartate/ornithine carbamoyltransferase superfamily. ATCase family. Heterododecamer (2C3:3R2) of six catalytic PyrB chains organized as two trimers (C3), and six regulatory PyrI chains organized as three dimers (R2).

It carries out the reaction carbamoyl phosphate + L-aspartate = N-carbamoyl-L-aspartate + phosphate + H(+). The protein operates within pyrimidine metabolism; UMP biosynthesis via de novo pathway; (S)-dihydroorotate from bicarbonate: step 2/3. Its function is as follows. Catalyzes the condensation of carbamoyl phosphate and aspartate to form carbamoyl aspartate and inorganic phosphate, the committed step in the de novo pyrimidine nucleotide biosynthesis pathway. The chain is Aspartate carbamoyltransferase catalytic subunit from Micrococcus luteus (strain ATCC 4698 / DSM 20030 / JCM 1464 / CCM 169 / CCUG 5858 / IAM 1056 / NBRC 3333 / NCIMB 9278 / NCTC 2665 / VKM Ac-2230) (Micrococcus lysodeikticus).